We begin with the raw amino-acid sequence, 141 residues long: Nucleoside diphosphate kinase (141 aa).

6 residues coordinate ATP: Lys-11, Phe-59, Arg-87, Thr-93, Arg-104, and Asn-114. His-117 serves as the catalytic Pros-phosphohistidine intermediate.

Belongs to the NDK family. As to quaternary structure, homotetramer. Mg(2+) is required as a cofactor.

Its subcellular location is the cytoplasm. The enzyme catalyses a 2'-deoxyribonucleoside 5'-diphosphate + ATP = a 2'-deoxyribonucleoside 5'-triphosphate + ADP. It catalyses the reaction a ribonucleoside 5'-diphosphate + ATP = a ribonucleoside 5'-triphosphate + ADP. In terms of biological role, major role in the synthesis of nucleoside triphosphates other than ATP. The ATP gamma phosphate is transferred to the NDP beta phosphate via a ping-pong mechanism, using a phosphorylated active-site intermediate. In Vibrio vulnificus (strain CMCP6), this protein is Nucleoside diphosphate kinase.